The sequence spans 407 residues: Transmembrane protein 184B (407 aa).

Positions 1–25 are disordered; that stretch reads MTVRGDVLAPDPASPTTAAASPSVS. Over residues 9–25 the composition is skewed to low complexity; sequence APDPASPTTAAASPSVS. A run of 7 helical transmembrane segments spans residues 40-60, 84-104, 121-141, 178-198, 214-234, 249-269, and 290-310; these read FLMTTAAQAISGFFVWTALLI, ILFIVPIYAFDSWLSLLFFTN, LVIYNFLSLCYEYLGGESSIM, LQFCVVKPLMAVSTVVLQAFG, VTIIYNISVSLALYALFLFYF, FFMVKSVIFLSFWQGMLLAIL, and VAAGYQDFIICVEMFFAALAL. A disordered region spans residues 369–395; that stretch reads TLEPGPTWRGGAHGLSRSHSLSGARDN. Residues Ser388, Ser402, and Ser403 each carry the phosphoserine modification.

It belongs to the TMEM184 family.

It is found in the membrane. Its function is as follows. May activate the MAP kinase signaling pathway. The polypeptide is Transmembrane protein 184B (TMEM184B) (Homo sapiens (Human)).